A 208-amino-acid chain; its full sequence is Small ribosomal subunit protein uS4 (208 aa).

The S4 RNA-binding domain occupies 98–158 (CRLDTVSYRM…EKAKNHLRIK (61 aa)).

Belongs to the universal ribosomal protein uS4 family. Part of the 30S ribosomal subunit. Contacts protein S5. The interaction surface between S4 and S5 is involved in control of translational fidelity.

One of the primary rRNA binding proteins, it binds directly to 16S rRNA where it nucleates assembly of the body of the 30S subunit. In terms of biological role, with S5 and S12 plays an important role in translational accuracy. This is Small ribosomal subunit protein uS4 from Nitrosospira multiformis (strain ATCC 25196 / NCIMB 11849 / C 71).